We begin with the raw amino-acid sequence, 355 residues long: Probable butyrate kinase (355 aa).

It belongs to the acetokinase family.

The protein localises to the cytoplasm. The enzyme catalyses butanoate + ATP = butanoyl phosphate + ADP. This chain is Probable butyrate kinase, found in Listeria welshimeri serovar 6b (strain ATCC 35897 / DSM 20650 / CCUG 15529 / CIP 8149 / NCTC 11857 / SLCC 5334 / V8).